Reading from the N-terminus, the 347-residue chain is GDT1-like protein 2, chloroplastic (347 aa).

The transit peptide at 1 to 12 (MATAISVGVAVP) directs the protein to the chloroplast. Residues 70 to 97 (EAGSHGEHLDSSATRDSNKPTKPPSGSR) are disordered. A run of 7 helical transmembrane segments spans residues 99–119 (PQSI…IVFF), 124–144 (SAVV…LIFV), 165–185 (ALVL…SVII), 196–216 (FQTT…FFGF), 257–277 (LTSP…AEWG), 299–319 (GAIA…AFLA), and 327–347 (VGLI…FGVF).

This sequence belongs to the GDT1 family.

It localises to the plastid. The protein resides in the chloroplast membrane. This is GDT1-like protein 2, chloroplastic from Oryza sativa subsp. japonica (Rice).